Reading from the N-terminus, the 297-residue chain is HTH-type transcriptional regulator ArgP (297 aa).

The 57-residue stretch at 4-60 (PDYRTLQALDAVIRERGFERAAQKLCITQSAVSQRIKQLENMFGQPLLVRTVPPRPT) folds into the HTH lysR-type domain. A DNA-binding region (H-T-H motif) is located at residues 21-40 (FERAAQKLCITQSAVSQRIK).

The protein belongs to the LysR transcriptional regulatory family. As to quaternary structure, homodimer.

In terms of biological role, controls the transcription of genes involved in arginine and lysine metabolism. In Klebsiella pneumoniae (strain 342), this protein is HTH-type transcriptional regulator ArgP.